A 233-amino-acid chain; its full sequence is Ribonuclease 3 (233 aa).

The 130-residue stretch at 7-136 folds into the RNase III domain; that stretch reads KQYLLSEFNI…FIGALYLDQG (130 aa). Glu49 contributes to the Mg(2+) binding site. Asp53 is a catalytic residue. Positions 122 and 125 each coordinate Mg(2+). Glu125 is an active-site residue. A DRBM domain is found at 162 to 232; sequence DFKSRLQEKL…ARAALKLLEE (71 aa).

It belongs to the ribonuclease III family. Homodimer. It depends on Mg(2+) as a cofactor.

Its subcellular location is the cytoplasm. It carries out the reaction Endonucleolytic cleavage to 5'-phosphomonoester.. In terms of biological role, digests double-stranded RNA. Involved in the processing of primary rRNA transcript to yield the immediate precursors to the large and small rRNAs (23S and 16S). Processes some mRNAs, and tRNAs when they are encoded in the rRNA operon. Processes pre-crRNA and tracrRNA of type II CRISPR loci if present in the organism. The chain is Ribonuclease 3 from Leuconostoc citreum (strain KM20).